A 478-amino-acid polypeptide reads, in one-letter code: Stromelysin-1 (478 aa).

An N-terminal signal peptide occupies residues 1–17; sequence MKTLPTLLLLCVALCSA. Residues 18–100 constitute a propeptide, activation peptide; the sequence is YPLDGASRDA…PRCGVPDVGH (83 aa). The Cysteine switch motif lies at 91–98; that stretch reads PRCGVPDV. Cysteine 93 serves as a coordination point for Zn(2+). Ca(2+) is bound by residues aspartate 125 and aspartate 159. Residues histidine 169 and aspartate 171 each contribute to the Zn(2+) site. Ca(2+) contacts are provided by aspartate 176, glycine 177, glycine 179, and valine 181. Histidine 184 provides a ligand contact to Zn(2+). Ca(2+) is bound by residues glycine 191, asparagine 193, and aspartate 195. Residue histidine 197 coordinates Zn(2+). Ca(2+)-binding residues include aspartate 199, aspartate 200, and glutamate 202. Histidine 219 lines the Zn(2+) pocket. Residue glutamate 220 is part of the active site. Residues histidine 223 and histidine 229 each coordinate Zn(2+). Hemopexin repeat units lie at residues 288–337, 338–384, 386–434, and 435–478; these read PVMC…WPSL, PSAV…GFPS, IRKI…FPGI, and NPKI…WFQC. A disulfide bond links cysteine 291 and cysteine 478. Residue aspartate 298 participates in Ca(2+) binding. 2 residues coordinate Ca(2+): aspartate 390 and aspartate 439.

Belongs to the peptidase M10A family. Ca(2+) serves as cofactor. Zn(2+) is required as a cofactor.

The protein resides in the secreted. The protein localises to the extracellular space. Its subcellular location is the extracellular matrix. The catalysed reaction is Preferential cleavage where P1', P2' and P3' are hydrophobic residues.. Metalloproteinase with a rather broad substrate specificity that can degrade fibronectin, laminin, gelatins of type I, III, IV, and V; collagens III, IV, X, and IX, and cartilage proteoglycans. Activates different molecules including growth factors, plasminogen or other matrix metalloproteinases such as MMP9. Once released into the extracellular matrix (ECM), the inactive pro-enzyme is activated by the plasmin cascade signaling pathway. Also acts intracellularly. For example, in dopaminergic neurons, gets activated by the serine protease HTRA2 upon stress and plays a pivotal role in DA neuronal degeneration by mediating microglial activation and alpha-synuclein/SNCA cleavage. In addition, plays a role in immune response and possesses antiviral activity against various viruses. Mechanistically, translocates from the cytoplasm into the cell nucleus upon virus infection to influence NF-kappa-B activities. The sequence is that of Stromelysin-1 (MMP3) from Oryctolagus cuniculus (Rabbit).